Consider the following 425-residue polypeptide: Putative type I restriction enzyme MjaX specificity subunit (425 aa).

It belongs to the type-I restriction system S methylase family.

In terms of biological role, a putative specificity (S) subunit of a type I restriction enzyme thought to recognize 5'-TAGN(6)TGC-3'; the other subunits are unknown. The sequence is that of Putative type I restriction enzyme MjaX specificity subunit from Methanocaldococcus jannaschii (strain ATCC 43067 / DSM 2661 / JAL-1 / JCM 10045 / NBRC 100440) (Methanococcus jannaschii).